A 471-amino-acid polypeptide reads, in one-letter code: Variant surface glycoprotein ILTAT 1.1BC (471 aa).

A signal peptide spans 1–21; that stretch reads MVKAIASLMLLHIWAIEEIKA. An N-linked (GlcNAc...) asparagine glycan is attached at Asn-130. Over residues 158-168 the composition is skewed to polar residues; that stretch reads TVSKTTECNTE. Disordered stretches follow at residues 158–183 and 204–232; these read TVSK…TLSK and GGAC…TTAS. The segment covering 214–226 has biased composition (basic and acidic residues); that stretch reads DKIHITNETDSKN. 2 N-linked (GlcNAc...) asparagine glycosylation sites follow: Asn-220 and Asn-260. 2 disulfide bridges follow: Cys-397–Cys-410 and Cys-406–Cys-421. The interval 432 to 454 is disordered; the sequence is AEQAATNQETEGKDGKTTNTTGS. An N-linked (GlcNAc...) asparagine glycan is attached at Asn-450. Ser-454 carries GPI-anchor amidated serine lipidation. The propeptide at 455–471 is removed in mature form; the sequence is NSFLINKAPVLLAFLLL.

The protein localises to the cell membrane. VSG forms a coat on the surface of the parasite. The trypanosome evades the immune response of the host by expressing a series of antigenically distinct VSGs from an estimated 1000 VSG genes. This Trypanosoma brucei brucei protein is Variant surface glycoprotein ILTAT 1.1BC.